A 340-amino-acid polypeptide reads, in one-letter code: DNA-directed RNA polymerase subunit alpha (340 aa).

The interval 1 to 236 (MLSLSKNWNT…EQLQLFISFE (236 aa)) is alpha N-terminal domain (alpha-NTD). The interval 251–340 (FSPYLLKRVD…LSKRYEDSYN (90 aa)) is alpha C-terminal domain (alpha-CTD).

Belongs to the RNA polymerase alpha chain family. Homodimer. The RNAP catalytic core consists of 2 alpha, 1 beta, 1 beta' and 1 omega subunit. When a sigma factor is associated with the core the holoenzyme is formed, which can initiate transcription.

The catalysed reaction is RNA(n) + a ribonucleoside 5'-triphosphate = RNA(n+1) + diphosphate. Its function is as follows. DNA-dependent RNA polymerase catalyzes the transcription of DNA into RNA using the four ribonucleoside triphosphates as substrates. The polypeptide is DNA-directed RNA polymerase subunit alpha (Rickettsia conorii (strain ATCC VR-613 / Malish 7)).